Here is a 389-residue protein sequence, read N- to C-terminus: Chalcone synthase 2 (389 aa).

55–62 contacts CoA; that stretch reads KFQRMCDK. Residue cysteine 164 is the Acyl-thioester intermediate of the active site. Substrate-binding positions include threonine 197 and 216–217; that span reads GD. Alanine 308 provides a ligand contact to CoA.

Belongs to the thiolase-like superfamily. Chalcone/stilbene synthases family. In terms of assembly, homodimer.

It catalyses the reaction (E)-4-coumaroyl-CoA + 3 malonyl-CoA + 3 H(+) = 2',4,4',6'-tetrahydroxychalcone + 3 CO2 + 4 CoA. It participates in secondary metabolite biosynthesis; flavonoid biosynthesis. In terms of biological role, the primary product of this enzyme is 4,2',4',6'-tetrahydroxychalcone (also termed naringenin-chalcone or chalcone) which can under specific conditions spontaneously isomerize into naringenin. This chain is Chalcone synthase 2 (CHS2), found in Medicago sativa (Alfalfa).